The chain runs to 179 residues: Adenine phosphoribosyltransferase (179 aa).

The protein belongs to the purine/pyrimidine phosphoribosyltransferase family. As to quaternary structure, homodimer.

Its subcellular location is the cytoplasm. The catalysed reaction is AMP + diphosphate = 5-phospho-alpha-D-ribose 1-diphosphate + adenine. It functions in the pathway purine metabolism; AMP biosynthesis via salvage pathway; AMP from adenine: step 1/1. Functionally, catalyzes a salvage reaction resulting in the formation of AMP, that is energically less costly than de novo synthesis. The sequence is that of Adenine phosphoribosyltransferase from Bradyrhizobium sp. (strain ORS 278).